A 460-amino-acid chain; its full sequence is UDP-N-acetylmuramoyl-tripeptide--D-alanyl-D-alanine ligase (460 aa).

115-121 serves as a coordination point for ATP; the sequence is GSSGKTS.

This sequence belongs to the MurCDEF family. MurF subfamily.

Its subcellular location is the cytoplasm. The enzyme catalyses D-alanyl-D-alanine + UDP-N-acetyl-alpha-D-muramoyl-L-alanyl-gamma-D-glutamyl-meso-2,6-diaminopimelate + ATP = UDP-N-acetyl-alpha-D-muramoyl-L-alanyl-gamma-D-glutamyl-meso-2,6-diaminopimeloyl-D-alanyl-D-alanine + ADP + phosphate + H(+). The protein operates within cell wall biogenesis; peptidoglycan biosynthesis. In terms of biological role, involved in cell wall formation. Catalyzes the final step in the synthesis of UDP-N-acetylmuramoyl-pentapeptide, the precursor of murein. The sequence is that of UDP-N-acetylmuramoyl-tripeptide--D-alanyl-D-alanine ligase from Buchnera aphidicola subsp. Baizongia pistaciae (strain Bp).